The sequence spans 673 residues: eEF1A lysine and N-terminal methyltransferase homolog (673 aa).

This sequence belongs to the methyltransferase superfamily.

The catalysed reaction is L-lysyl-[protein] + S-adenosyl-L-methionine = N(6)-methyl-L-lysyl-[protein] + S-adenosyl-L-homocysteine + H(+). The enzyme catalyses N(6)-methyl-L-lysyl-[protein] + S-adenosyl-L-methionine = N(6),N(6)-dimethyl-L-lysyl-[protein] + S-adenosyl-L-homocysteine + H(+). It catalyses the reaction N-terminal glycyl-L-lysyl-L-glutamyl-[protein] + 3 S-adenosyl-L-methionine = N-terminal N,N,N-trimethyl-glycyl-L-lysyl-L-glutamyl-[protein] + 3 S-adenosyl-L-homocysteine + 3 H(+). Its function is as follows. Dual methyltransferase. It catalyzes N-terminal methylation of target proteins via its C-terminus. It catalyzes dimethylation on lysine residues of target proteins via its N-terminus. This Drosophila melanogaster (Fruit fly) protein is eEF1A lysine and N-terminal methyltransferase homolog.